We begin with the raw amino-acid sequence, 404 residues long: Tryptophan synthase beta chain (404 aa).

Lysine 94 carries the N6-(pyridoxal phosphate)lysine modification.

It belongs to the TrpB family. As to quaternary structure, tetramer of two alpha and two beta chains. Pyridoxal 5'-phosphate is required as a cofactor.

The catalysed reaction is (1S,2R)-1-C-(indol-3-yl)glycerol 3-phosphate + L-serine = D-glyceraldehyde 3-phosphate + L-tryptophan + H2O. Its pathway is amino-acid biosynthesis; L-tryptophan biosynthesis; L-tryptophan from chorismate: step 5/5. Its function is as follows. The beta subunit is responsible for the synthesis of L-tryptophan from indole and L-serine. The chain is Tryptophan synthase beta chain from Staphylococcus aureus (strain JH1).